The primary structure comprises 832 residues: WD repeat-containing protein 75 (832 aa).

13 WD repeats span residues 4-43 (KTDI…KVYS), 47-86 (EEWL…KLWD), 90-134 (GILI…QLVA), 148-187 (KELS…YFFR), 196-233 (LKAT…RLWR), 239-278 (KEYT…VQWQ), 281-320 (DMSK…SIIE), 326-364 (SGLI…QFYS), 378-425 (QQEY…KLWA), 432-474 (SFVL…KAWC), 485-523 (YWSC…TLWS), 527-567 (WELL…CCWN), and 572-609 (ALEW…FVFK). Disordered regions lie at residues 704 to 723 (QHKL…HTQG) and 759 to 811 (VREE…AQER). A compositionally biased stretch (acidic residues) spans 764–785 (DSSEQEMDSEKEEEESEEEMEA). Basic and acidic residues predominate over residues 799–811 (DEQKPKLSKAQER).

As to quaternary structure, component of the proposed t-UTP subcomplex of the ribosomal small subunit (SSU) processome. SSU processome is composed of more than 70 proteins and the RNA chaperone small nucleolar RNA (snoRNA) U3.

The protein resides in the nucleus. It is found in the nucleolus. Functionally, ribosome biogenesis factor. Part of the small subunit (SSU) processome, first precursor of the small eukaryotic ribosomal subunit. During the assembly of the SSU processome in the nucleolus, many ribosome biogenesis factors, an RNA chaperone and ribosomal proteins associate with the nascent pre-rRNA and work in concert to generate RNA folding, modifications, rearrangements and cleavage as well as targeted degradation of pre-ribosomal RNA by the RNA exosome. Involved in nucleolar processing of pre-18S ribosomal RNA. Required for optimal pre-ribosomal RNA transcription by RNA polymerase I. The protein is WD repeat-containing protein 75 (wdr75) of Danio rerio (Zebrafish).